The sequence spans 572 residues: Urease subunit alpha (572 aa).

His139, His141, and Lys222 together coordinate Ni(2+). Lys222 carries the N6-carboxylysine modification. His224 provides a ligand contact to substrate. 2 residues coordinate Ni(2+): His251 and His277. The active-site Proton donor is His325. Asp365 provides a ligand contact to Ni(2+).

This sequence belongs to the metallo-dependent hydrolases superfamily. Urease alpha subunit family. Heterotrimer of UreA (gamma), UreB (beta) and UreC (alpha) subunits. Three heterotrimers associate to form the active enzyme. Ni cation is required as a cofactor. Post-translationally, carboxylation allows a single lysine to coordinate two nickel ions.

The protein localises to the cytoplasm. The enzyme catalyses urea + 2 H2O + H(+) = hydrogencarbonate + 2 NH4(+). It functions in the pathway nitrogen metabolism; urea degradation; CO(2) and NH(3) from urea (urease route): step 1/1. This Acetivibrio thermocellus (strain ATCC 27405 / DSM 1237 / JCM 9322 / NBRC 103400 / NCIMB 10682 / NRRL B-4536 / VPI 7372) (Clostridium thermocellum) protein is Urease subunit alpha.